The primary structure comprises 580 residues: MRWKHGGPWVLIIIYNMIHHCSSGLERIVSFKLEPGSQVIVFPFIFEGYNIIALPTTKYSDLKKNPKDMKSLTPFFFNASHIIWDFAIGSVIRTPDNRFERLFNERMEGYLKDISVNVLKMYVKGNKTISELLEAVYERIFRCDEKGGGHMMKYIEDVIKGFDDMIENVPTEMDSERKEIYHRFWSGSRKYVESFYSIERLKHLVELEKMVCSACREICLGLKEEKLMGLFAEGSMRKALKAKLGEEEASRRGYLEYAIINDEILLDAHREHTGEVTKELVMQMLLGKNGEEIDRRYIGKVANVVKERQKRREREMEKSMKELLRDEEKAKSKKGRKKKSVGVSETKKEESETEEVEASEEMEISSVEVGGARRKTGKKSKGGRKCFKIHRRVLRWRKSPEKIKEELDRGREERWRGKSLEYIKEQKVLHDIAGVLELLRSEDADKFFMDTGEHSKGGSSRRRLMAIGVLEVGRRRMTGVVEAGTFKDSSGCTVLYHLMFRVTGIEEIGSVMSPEFAEANDIEKIDEDEECQDAGKFVYPKGVRFETVKDDDAFQIVWRNPSDTSEVLQGLTIQRRPYVI.

Basic and acidic residues predominate over residues 308 to 330; that stretch reads RQKRREREMEKSMKELLRDEEKA. A disordered region spans residues 308-384; the sequence is RQKRREREME…KTGKKSKGGR (77 aa). Residues 331 to 340 are compositionally biased toward basic residues; sequence KSKKGRKKKS. The span at 351–363 shows a compositional bias: acidic residues; sequence SETEEVEASEEME. Basic residues predominate over residues 372–384; sequence ARRKTGKKSKGGR.

This sequence belongs to the UPF0329 family.

This chain is UPF0329 protein ECU06_0080, found in Encephalitozoon cuniculi (strain GB-M1) (Microsporidian parasite).